The following is a 212-amino-acid chain: Orotate phosphoribosyltransferase (212 aa).

5-phospho-alpha-D-ribose 1-diphosphate is bound by residues arginine 97, lysine 101, histidine 103, and 123–131 (EDLISTGGS). Serine 127 lines the orotate pocket.

The protein belongs to the purine/pyrimidine phosphoribosyltransferase family. PyrE subfamily. Homodimer. Requires Mg(2+) as cofactor.

It carries out the reaction orotidine 5'-phosphate + diphosphate = orotate + 5-phospho-alpha-D-ribose 1-diphosphate. It functions in the pathway pyrimidine metabolism; UMP biosynthesis via de novo pathway; UMP from orotate: step 1/2. Its function is as follows. Catalyzes the transfer of a ribosyl phosphate group from 5-phosphoribose 1-diphosphate to orotate, leading to the formation of orotidine monophosphate (OMP). The protein is Orotate phosphoribosyltransferase of Bacteroides fragilis (strain ATCC 25285 / DSM 2151 / CCUG 4856 / JCM 11019 / LMG 10263 / NCTC 9343 / Onslow / VPI 2553 / EN-2).